Consider the following 263-residue polypeptide: Purine nucleoside phosphorylase SE_0862 (263 aa).

3 residues coordinate Zn(2+): histidine 79, cysteine 124, and histidine 141.

This sequence belongs to the purine nucleoside phosphorylase YfiH/LACC1 family. As to quaternary structure, homodimer. The cofactor is Cu(2+). Zn(2+) serves as cofactor.

It catalyses the reaction adenosine + phosphate = alpha-D-ribose 1-phosphate + adenine. The catalysed reaction is S-methyl-5'-thioadenosine + phosphate = 5-(methylsulfanyl)-alpha-D-ribose 1-phosphate + adenine. The enzyme catalyses inosine + phosphate = alpha-D-ribose 1-phosphate + hypoxanthine. It carries out the reaction adenosine + H2O + H(+) = inosine + NH4(+). Functionally, purine nucleoside enzyme that catalyzes the phosphorolysis of adenosine and inosine nucleosides, yielding D-ribose 1-phosphate and the respective free bases, adenine and hypoxanthine. Also catalyzes the phosphorolysis of S-methyl-5'-thioadenosine into adenine and S-methyl-5-thio-alpha-D-ribose 1-phosphate. Also has adenosine deaminase activity. This is Purine nucleoside phosphorylase SE_0862 from Staphylococcus epidermidis (strain ATCC 12228 / FDA PCI 1200).